Here is a 492-residue protein sequence, read N- to C-terminus: Trigger factor (492 aa).

Residues 77-96 form a disordered region; the sequence is EILSSRGEKSATQPAISMTE. A PPIase FKBP-type domain is found at 169 to 254; sequence GDRVTMNYLG…VKEVAAAAAV (86 aa). The interval 439–492 is disordered; sequence ELLADDGEEETETKKKAPAKKKAAAKADDAAEGEEAAPKKKAPAKKKATEADAE.

This sequence belongs to the FKBP-type PPIase family. Tig subfamily.

It is found in the cytoplasm. The enzyme catalyses [protein]-peptidylproline (omega=180) = [protein]-peptidylproline (omega=0). Involved in protein export. Acts as a chaperone by maintaining the newly synthesized protein in an open conformation. Functions as a peptidyl-prolyl cis-trans isomerase. The chain is Trigger factor from Agrobacterium fabrum (strain C58 / ATCC 33970) (Agrobacterium tumefaciens (strain C58)).